The following is an 807-amino-acid chain: 1-phosphatidylinositol 4,5-bisphosphate phosphodiesterase delta-4 (807 aa).

In terms of domain architecture, PH spans L16–D124. Residues K26–P53 form a substrate binding region. 3 EF-hand domains span residues Q134 to E169, M170 to R205, and T203 to E237. Ca(2+) contacts are provided by D147, N149, D151, R153, E158, D183, S187, D189, and E194. Residues E213–D243 carry the GBA motif. Residues Q290–K435 form the PI-PLC X-box domain. H305 is a catalytic residue. Ca(2+)-binding residues include N306, E335, and D337. Residue H350 is part of the active site. E384 serves as a coordination point for Ca(2+). Residues K433 and K435 each coordinate substrate. Residues V442–K490 are disordered. Positions D443–D462 are enriched in acidic residues. Over residues L470–A482 the composition is skewed to polar residues. Residues L538–R654 enclose the PI-PLC Y-box domain. Residues S567 and R594 each coordinate substrate. The 128-residue stretch at R654 to S781 folds into the C2 domain. D697, N721, D750, and Y751 together coordinate Ca(2+). The PDZ-binding motif lies at H776–L779.

As to quaternary structure, interacts with GRIP1. Interacts (via GBA motif) with guanine nucleotide-binding protein G(i) alpha subunit GNAI3 (inactive GDP-bound form)l low-affinity interaction. Ca(2+) serves as cofactor.

Its subcellular location is the membrane. It is found in the nucleus. It localises to the cytoplasm. The protein resides in the endoplasmic reticulum. The enzyme catalyses a 1,2-diacyl-sn-glycero-3-phospho-(1D-myo-inositol-4,5-bisphosphate) + H2O = 1D-myo-inositol 1,4,5-trisphosphate + a 1,2-diacyl-sn-glycerol + H(+). It carries out the reaction a 1,2-diacyl-sn-glycero-3-phospho-(1D-myo-inositol) + H2O = 1D-myo-inositol 1-phosphate + a 1,2-diacyl-sn-glycerol + H(+). In terms of biological role, hydrolyzes the phosphatidylinositol 4,5-bisphosphate (PIP2) to generate 2 second messenger molecules diacylglycerol (DAG) and inositol 1,4,5-trisphosphate (IP3). DAG mediates the activation of protein kinase C (PKC), while IP3 releases Ca(2+) from intracellular stores. Required for acrosome reaction in sperm during fertilization, probably by acting as an important enzyme for intracellular Ca(2+) mobilization in the zona pellucida-induced acrosome reaction. May play a role in cell growth. Modulates the liver regeneration in cooperation with nuclear PKC. Overexpression up-regulates the Erk signaling pathway and proliferation. The sequence is that of 1-phosphatidylinositol 4,5-bisphosphate phosphodiesterase delta-4 from Mus musculus (Mouse).